The following is a 290-amino-acid chain: Acetylglutamate kinase (290 aa).

Residues 65–66 (GG), Arg87, and Asn186 each bind substrate.

It belongs to the acetylglutamate kinase family. ArgB subfamily.

It is found in the cytoplasm. The catalysed reaction is N-acetyl-L-glutamate + ATP = N-acetyl-L-glutamyl 5-phosphate + ADP. It functions in the pathway amino-acid biosynthesis; L-arginine biosynthesis; N(2)-acetyl-L-ornithine from L-glutamate: step 2/4. Catalyzes the ATP-dependent phosphorylation of N-acetyl-L-glutamate. This Mycolicibacterium gilvum (strain PYR-GCK) (Mycobacterium gilvum (strain PYR-GCK)) protein is Acetylglutamate kinase.